A 387-amino-acid chain; its full sequence is ATP phosphoribosyltransferase regulatory subunit (387 aa).

It belongs to the class-II aminoacyl-tRNA synthetase family. HisZ subfamily. In terms of assembly, heteromultimer composed of HisG and HisZ subunits.

It is found in the cytoplasm. It participates in amino-acid biosynthesis; L-histidine biosynthesis; L-histidine from 5-phospho-alpha-D-ribose 1-diphosphate: step 1/9. In terms of biological role, required for the first step of histidine biosynthesis. May allow the feedback regulation of ATP phosphoribosyltransferase activity by histidine. In Ralstonia pickettii (strain 12J), this protein is ATP phosphoribosyltransferase regulatory subunit.